A 583-amino-acid chain; its full sequence is MPKPINVRVTTMDAELEFAIQPNTTGKQLFDQVVKTVGLREVWFFGLQYVDSKGYSTWLKLNKKVTQQDVRKENPLQFKFRAKFFPEDVSEELIQEITQRLFFLQVKEAILNDEIYCPPETAVLLASYAVQSKYGDYNKEIHKLGYLANDRLLPQRVLEQHKLTKEQWEERIQNWHEEHRGMLREDSMMEYLKIAQDLEMYGVNYFEIKNKKGTELWLGVDALGLNIYEHDDKLTPKIGFPWSEIRNISFNDKKFVIKPIDKKAPDFVFYAPRLRINKRILALCMGNHELYMRRRKPDTIEVQQMKAQAREEKHQKQLERAQLENEKKKREIAEKEKERIEREKEELMERLRQIEEQTMKAQKELEEQTRRALELDQERKRAKEEAERLEKERRAAEEAKAALAKQAADQMKNQEQLAAELAEFTAKIALLEEAKKKKEEEASEWQHKAFAAQEDLEKTKEELKSVMSAPPPPPPPPVIPPTENEHDEHDENNAEASAELSSDGVMNHRSEEERVTETQKNERVKKQLQALSSELAQARDETKKTQNDVLHAENVKAGRGKYKTLRQIRQGNTKQRIDEFEAM.

The region spanning 5–295 (INVRVTTMDA…GNHELYMRRR (291 aa)) is the FERM domain. A 1,2-diacyl-sn-glycero-3-phospho-(1D-myo-inositol) is bound by residues 60 to 63 (KLNK) and Lys-278. 2 disordered regions span residues 310–336 (REEK…AEKE) and 436–527 (KKKE…VKKQ). Composition is skewed to basic and acidic residues over residues 436-447 (KKKEEEASEWQH) and 455-464 (DLEKTKEELK). Over residues 469-480 (APPPPPPPPVIP) the composition is skewed to pro residues. Basic and acidic residues-rich tracts occupy residues 483 to 492 (ENEHDEHDEN) and 506 to 525 (MNHR…ERVK).

The protein resides in the cell membrane. The protein localises to the cytoplasm. Its subcellular location is the cytoskeleton. Its function is as follows. Probably plays a crucial role in the binding of the barbed end of actin filaments to the plasma membrane. This chain is Radixin (RDX), found in Gallus gallus (Chicken).